The following is a 406-amino-acid chain: tRNA-specific 2-thiouridylase MnmA (406 aa).

ATP is bound by residues 42-49 (GLSGGVDS) and L68. C129 serves as the catalytic Nucleophile. C129 and C239 are oxidised to a cystine. Residue G154 participates in ATP binding. Residues 189–191 (KDQ) form an interaction with tRNA region. C239 serves as the catalytic Cysteine persulfide intermediate. Residues 344-345 (RY) are interaction with tRNA.

This sequence belongs to the MnmA/TRMU family.

The protein resides in the cytoplasm. The catalysed reaction is S-sulfanyl-L-cysteinyl-[protein] + uridine(34) in tRNA + AH2 + ATP = 2-thiouridine(34) in tRNA + L-cysteinyl-[protein] + A + AMP + diphosphate + H(+). Its function is as follows. Catalyzes the 2-thiolation of uridine at the wobble position (U34) of tRNA, leading to the formation of s(2)U34. The sequence is that of tRNA-specific 2-thiouridylase MnmA from Prochlorococcus marinus (strain SARG / CCMP1375 / SS120).